We begin with the raw amino-acid sequence, 336 residues long: C4-dicarboxylate-binding periplasmic protein DctP (336 aa).

A signal peptide spans Met1–Ala31. Positions 48, 101, 176, 216, 220, and 243 each coordinate (S)-malate. Lys48, Lys101, Arg176, Asn216, Asn220, and Tyr243 together coordinate succinate.

This sequence belongs to the bacterial solute-binding protein 7 family. In terms of assembly, the complex comprises the extracytoplasmic solute receptor protein DctP, and the two transmembrane proteins DctQ and DctM.

Its subcellular location is the periplasm. Its function is as follows. Part of the tripartite ATP-independent periplasmic (TRAP) transport system DctPQM involved in C4-dicarboxylates uptake. Required for the utilization of succinate, fumarate, L-malate and alpha-ketoglutarate. Binds succinate and malate. The sequence is that of C4-dicarboxylate-binding periplasmic protein DctP from Shewanella loihica (strain ATCC BAA-1088 / PV-4).